The following is an 846-amino-acid chain: Aminopeptidase N (846 aa).

Substrate contacts are provided by residues Glu120 and 252–256 (GAMEN). His288 lines the Zn(2+) pocket. The Proton acceptor role is filled by Glu289. Residues His292 and Glu311 each contribute to the Zn(2+) site.

This sequence belongs to the peptidase M1 family. In terms of assembly, monomer. The cofactor is Zn(2+).

It is found in the cytoplasm. The enzyme catalyses Release of an N-terminal amino acid, Xaa-|-Yaa- from a peptide, amide or arylamide. Xaa is preferably Ala, but may be most amino acids including Pro (slow action). When a terminal hydrophobic residue is followed by a prolyl residue, the two may be released as an intact Xaa-Pro dipeptide.. Functionally, aminopeptidase with broad substrate specificity to several peptides. It has more affinity for oligopeptides than for dipeptides. It plays an essential role in the metabolism, it may be involved in nitrogen supply or protein turnover. The sequence is that of Aminopeptidase N (pepN) from Lactococcus lactis subsp. cremoris (Streptococcus cremoris).